We begin with the raw amino-acid sequence, 180 residues long: Large ribosomal subunit protein uL5 (180 aa).

Belongs to the universal ribosomal protein uL5 family. Part of the 50S ribosomal subunit; part of the 5S rRNA/L5/L18/L25 subcomplex. Contacts the 5S rRNA and the P site tRNA. Forms a bridge to the 30S subunit in the 70S ribosome.

Its function is as follows. This is one of the proteins that bind and probably mediate the attachment of the 5S RNA into the large ribosomal subunit, where it forms part of the central protuberance. In the 70S ribosome it contacts protein S13 of the 30S subunit (bridge B1b), connecting the 2 subunits; this bridge is implicated in subunit movement. Contacts the P site tRNA; the 5S rRNA and some of its associated proteins might help stabilize positioning of ribosome-bound tRNAs. The polypeptide is Large ribosomal subunit protein uL5 (Lacticaseibacillus casei (strain BL23) (Lactobacillus casei)).